A 351-amino-acid chain; its full sequence is Glycerol-1-phosphate dehydrogenase [NAD(P)+] (351 aa).

Residues 93–97 (GKVLD) and 115–118 (TTAS) each bind NAD(+). Residue Asp-120 coordinates substrate. NAD(+) is bound at residue Ser-124. Asp-167 provides a ligand contact to substrate. The Zn(2+) site is built by Asp-167 and His-247. His-251 lines the substrate pocket. Zn(2+) is bound at residue His-263.

This sequence belongs to the glycerol-1-phosphate dehydrogenase family. It depends on Zn(2+) as a cofactor.

Its subcellular location is the cytoplasm. It catalyses the reaction sn-glycerol 1-phosphate + NAD(+) = dihydroxyacetone phosphate + NADH + H(+). The catalysed reaction is sn-glycerol 1-phosphate + NADP(+) = dihydroxyacetone phosphate + NADPH + H(+). The protein operates within membrane lipid metabolism; glycerophospholipid metabolism. Functionally, catalyzes the NAD(P)H-dependent reduction of dihydroxyacetonephosphate (DHAP or glycerone phosphate) to glycerol 1-phosphate (G1P). The G1P thus generated is used as the glycerophosphate backbone of phospholipids in the cellular membranes of Archaea. The protein is Glycerol-1-phosphate dehydrogenase [NAD(P)+] of Archaeoglobus fulgidus (strain ATCC 49558 / DSM 4304 / JCM 9628 / NBRC 100126 / VC-16).